Reading from the N-terminus, the 352-residue chain is uncharacterized protein (352 aa).

8 consecutive transmembrane segments (helical) span residues 6–26, 30–50, 76–96, 151–171, 197–217, 226–246, 291–311, and 330–350; these read FIFL…IINP, FHIV…IINI, IFLT…FVII, EFII…LPFL, FILV…LPLI, VKVD…IEGL, WLPI…ASFA, and LIGG…AKIF.

Belongs to the CitM (TC 2.A.11) transporter family.

It localises to the cell membrane. This is an uncharacterized protein from Methanocaldococcus jannaschii (strain ATCC 43067 / DSM 2661 / JAL-1 / JCM 10045 / NBRC 100440) (Methanococcus jannaschii).